The chain runs to 300 residues: Jacalin-related lectin 32 (300 aa).

An N-acetylalanine modification is found at Ala-2. 2 Jacalin-type lectin domains span residues 2–146 (AQKV…YFTT) and 154–297 (AKKL…HILP).

It belongs to the jacalin lectin family.

In terms of biological role, involved in gametophytic development. The chain is Jacalin-related lectin 32 (JAL32) from Arabidopsis thaliana (Mouse-ear cress).